Here is a 344-residue protein sequence, read N- to C-terminus: Flavonoid 7-O-methyltransferase 1A (344 aa).

Asp211 is a binding site for S-adenosyl-L-methionine. Catalysis depends on His249, which acts as the Proton acceptor.

This sequence belongs to the class I-like SAM-binding methyltransferase superfamily. Cation-independent O-methyltransferase family. As to quaternary structure, homodimer.

It carries out the reaction apigenin + S-adenosyl-L-methionine = genkwanin + S-adenosyl-L-homocysteine + H(+). The catalysed reaction is luteolin + S-adenosyl-L-methionine = luteolin 7-methyl ether + S-adenosyl-L-homocysteine + H(+). It catalyses the reaction quercetin + S-adenosyl-L-methionine = rhamnetin + S-adenosyl-L-homocysteine + H(+). The enzyme catalyses (2S)-naringenin + S-adenosyl-L-methionine = (2S)-sakuranetin + S-adenosyl-L-homocysteine + H(+). It carries out the reaction kaempferol + S-adenosyl-L-methionine = kaempferol 7-methyl ether + S-adenosyl-L-homocysteine + H(+). The catalysed reaction is isorhamnetin + S-adenosyl-L-methionine = rhamnacene + S-adenosyl-L-homocysteine + H(+). It catalyses the reaction 4',7,8-trihydroxyflavone + S-adenosyl-L-methionine = 4',8-dihydroxy-7-methoxyflavone + S-adenosyl-L-homocysteine. The enzyme catalyses scutellarein + S-adenosyl-L-methionine = scutellarein 7-methyl ether + S-adenosyl-L-homocysteine. The protein operates within flavonoid metabolism. In terms of biological role, flavonoid 7-O-methyltransferase involved in the biosynthesis of polymethoxylated flavonoids natural products such as pebrellin, aroma compounds which contribute to the flavor of peppermint, and exhibit pharmacological activities such as anti-allergic, anti-oxidant, antibacterial, anti-proliferative, and anti-inflammatory effects. Catalyzes S-adenosylmethionine-dependent regioselective 7-O-methylation of flavonoids; active on various hydroxylated flavonoid substrates, including luteolin (LUT), quercetin, kaempferol, isorhamnetin, apigenin (API), scutellarein (6-hydroxy-apigenin, 6-OH-API, SCU), 7,8,4'-trihydroxy-flavone and naringenin (NAR), and, with a lower efficiency, 7,8,3',4'-tetrahydroxy-flavone, taxifolin, hesperetin and genistein. The chain is Flavonoid 7-O-methyltransferase 1A from Mentha piperita (Peppermint).